The chain runs to 551 residues: Protein ROOT HAIR SPECIFIC 17 (551 aa).

Residues 39–59 (LFPLVSAVSGCLLLILFSFST) traverse the membrane as a helical; Signal-anchor for type II membrane protein segment. 2 N-linked (GlcNAc...) asparagine glycosylation sites follow: asparagine 109 and asparagine 153. A substrate-binding site is contributed by 293 to 295 (HLR). 2 N-linked (GlcNAc...) asparagine glycosylation sites follow: asparagine 405 and asparagine 465. The disordered stretch occupies residues 515–539 (KAKHVNEDDSSEYSEIGNVPISSRS).

It belongs to the glycosyltransferase GT106 family. As to expression, specifically expressed in the root hair.

The protein resides in the membrane. The protein operates within glycan metabolism. The polypeptide is Protein ROOT HAIR SPECIFIC 17 (Arabidopsis thaliana (Mouse-ear cress)).